A 164-amino-acid polypeptide reads, in one-letter code: 3-isopropylmalate dehydratase small subunit 1 (164 aa).

It belongs to the LeuD family. LeuD type 2 subfamily. As to quaternary structure, heterodimer of LeuC and LeuD.

It catalyses the reaction (2R,3S)-3-isopropylmalate = (2S)-2-isopropylmalate. It functions in the pathway amino-acid biosynthesis; L-leucine biosynthesis; L-leucine from 3-methyl-2-oxobutanoate: step 2/4. Functionally, catalyzes the isomerization between 2-isopropylmalate and 3-isopropylmalate, via the formation of 2-isopropylmaleate. This chain is 3-isopropylmalate dehydratase small subunit 1 (leuD1), found in Pyrococcus abyssi (strain GE5 / Orsay).